Consider the following 759-residue polypeptide: MRTSPRRPLILKRRRLPLPIQNAPSETSEEEAKRSPGQQEPTQAQASQDVAESSSCKFPAGIKIINHPTVPNTQVVAIPNNADIQSIITALTAKGKESGSSGPNKFILISSGGASSHPPDPQSQAQTSTDSKRTELITETLGPKPGAKGVPVPKPPGALPRQRQESCGGEAAGCTLDNSLTNIQWLGKMSSDGLGRCSIKQELEEKENCHLEQNRVKVEAPSRASVSWQDSVSERPPYSYMAMIQFAINSTERKRMTLKDIYTWIEDHFPYFKHIAKPGWKNSIRHNLSLHDMFVRETSANGKVSFWTIHPSANRYLTLDQVFKPLEPGSPQSPEHLESQQKRPNPELRRNVTIKTELPLGARRKMKPLLPRVSSYLVPIQFPVNQSLVLQPSVKVPLPLAASLMSSELARHSKRVRIAPKVLLSNEGIAPLPATEPMKEEKPLLGEGLLPLLPIQSIKEEVIQPGEDIPHLERPIKVESPPLEEWPSPCASVKEELSNSWEDSSCSPTPKPKKSYCGLKSPTRCVSEMLVTKRREKREVSRSRRKQHLQPPCLDEPELFFSEDSSTFRPAMEILAESSEPAPQLSCPQEEGGPFKTPIKETLPVSSTPSKSVLSRDPESWRLTPPAKVGGLDFSPVRTPQGAFGPLPDSLGLMELNTTPLKSVPLFDSPRELLNSEAFDLASDPFSSSPPPHLEAKPGSPELQVPSLSANRSLTEGLVLDTMNDSLSKILLDISFPGLEEDPLGPDNINWSQFIPELR.

Disordered regions lie at residues 1–54 and 94–165; these read MRTS…AESS and KGKE…QRQE. Over residues 36 to 54 the composition is skewed to polar residues; the sequence is PGQQEPTQAQASQDVAESS. A compositionally biased stretch (low complexity) spans 141-151; sequence LGPKPGAKGVP. Residues Lys200 and Lys324 each participate in a glycyl lysine isopeptide (Lys-Gly) (interchain with G-Cter in SUMO2) cross-link. Positions 234 to 326 form a DNA-binding region, fork-head; it reads ERPPYSYMAM…LTLDQVFKPL (93 aa). The tract at residues 328–349 is disordered; the sequence is PGSPQSPEHLESQQKRPNPELR. Ser330 carries the post-translational modification Phosphoserine. Residues 335 to 349 are compositionally biased toward basic and acidic residues; sequence EHLESQQKRPNPELR. Lys355 participates in a covalent cross-link: Glycyl lysine isopeptide (Lys-Gly) (interchain with G-Cter in SUMO2). Phosphoserine; by CHEK2 is present on Ser375. Glycyl lysine isopeptide (Lys-Gly) (interchain with G-Cter in SUMO2) cross-links involve residues Lys421 and Lys439. Ser521 is subject to Phosphoserine. 3 disordered regions span residues 530-556, 572-643, and 681-706; these read LVTK…CLDE, MEIL…PQGA, and LASD…LQVP. Positions 531–542 are enriched in basic and acidic residues; sequence VTKRREKREVSR. Positions 604–613 are enriched in polar residues; it reads PVSSTPSKSV. A Phosphothreonine; by CDK1 modification is found at Thr608. Thr624 is modified (phosphothreonine). A phosphoserine; by PLK1 mark is found at Ser726 and Ser735.

Post-translationally, phosphorylated in M (mitotic) phase. Phosphorylation by the checkpoint kinase CHEK2 in response to DNA damage increases the FOXM1 protein stability probably stimulating the transcription of genes involved in DNA repair. Phosphorylated by CDK1 in late S and G2 phases, creating docking sites for the POLO box domains of PLK1. Subsequently, PLK1 binds and phosphorylates FOXM1, leading to activation of transcriptional activity and subsequent enhanced expression of key mitotic regulators. Phosphorylated by GSK3B leading to ubiquitination and proteasomal degradation. Highly expressed in thymus and testis, but weakly in intestine and lung. Appears to be expressed only in adult organs containing proliferating/cycling cells or in response to growth factors.

The protein localises to the nucleus. In terms of biological role, transcription factor regulating the expression of cell cycle genes essential for DNA replication and mitosis. Plays a role in the control of cell proliferation. Also plays a role in DNA break repair, participating in the DNA damage checkpoint response. Promotes transcription of PHB2. The chain is Forkhead box protein M1 (Foxm1) from Rattus norvegicus (Rat).